Consider the following 119-residue polypeptide: MIQMNDSKLEVLALGKNIRMSPHKVRKVIDQIRGRSYEEALMLLTFMPYRACDPILKVVCSAAANASHNFGFRKSTLYISEAKVDKGPLFKRFRPRAQGRGFPISKPTCYITIVITSRT.

The protein belongs to the universal ribosomal protein uL22 family. As to quaternary structure, part of the 50S ribosomal subunit.

The protein localises to the plastid. It localises to the chloroplast. Its function is as follows. This protein binds specifically to 23S rRNA. In terms of biological role, the globular domain of the protein is located near the polypeptide exit tunnel on the outside of the subunit, while an extended beta-hairpin is found that lines the wall of the exit tunnel in the center of the 70S ribosome. The sequence is that of Large ribosomal subunit protein uL22c (rpl22) from Spirogyra maxima (Green alga).